Consider the following 384-residue polypeptide: Surfeit locus protein 1-like (384 aa).

3 helical membrane passes run 55–75 (ALLW…YKFL), 302–322 (IPLD…TCFI), and 338–358 (IGVE…TKIY).

The protein belongs to the SURF1 (TC 3.D.4.8) family.

The protein resides in the mitochondrion inner membrane. In terms of biological role, may be involved in the biogenesis of the COX complex. This Arabidopsis thaliana (Mouse-ear cress) protein is Surfeit locus protein 1-like.